Here is a 466-residue protein sequence, read N- to C-terminus: Hepatocyte nuclear factor 3-alpha (466 aa).

The segment at residues 169–260 (AKPPYSYISL…GNMFENGCYL (92 aa)) is a DNA-binding region (fork-head). Residues 251–288 (GNMFENGCYLRRQKRFKCEKQPGAGGGSGGGGSKGVPE) form an essential for DNA binding region. The interval 269–358 (EKQPGAGGGS…ASSSAPPISS (90 aa)) is disordered. The span at 273-284 (GAGGGSGGGGSK) shows a compositional bias: gly residues. Residues S303 and S327 each carry the phosphoserine modification. Low complexity-rich tracts occupy residues 318–328 (GAPAPGPAASP) and 344–358 (ELKS…PISS).

Binds DNA as a monomer. Interacts with FOXA2. Interacts with NKX2-1. Interacts with HDAC7. Interacts with the histone H3-H4 heterodimer. Associates with nucleosomes containing histone H2A. Interacts with AR. Interacts with NR0B2. In terms of tissue distribution, liver.

The protein localises to the nucleus. In terms of biological role, transcription factor that is involved in embryonic development, establishment of tissue-specific gene expression and regulation of gene expression in differentiated tissues. Is thought to act as a 'pioneer' factor opening the compacted chromatin for other proteins through interactions with nucleosomal core histones and thereby replacing linker histones at target enhancer and/or promoter sites. Binds DNA with the consensus sequence 5'-[AC]A[AT]T[AG]TT[GT][AG][CT]T[CT]-3'. Proposed to play a role in translating the epigenetic signatures into cell type-specific enhancer-driven transcriptional programs. Involved in glucose homeostasis; activates the GCG promoter. Involved in the development of multiple endoderm-derived organ systems such as the liver, pancreas, lungs and prostate; FOXA1 and FOXA2 seem to have at least in part redundant roles. Modulates the transcriptional activity of nuclear hormone receptors. Is required for maximal gene activation mediated by AR in the prostate. Negatively regulates AR transactivation via competition with coactivators such as NCOA2. Is involved in ESR1-mediated transcription. Involved in regulation of apoptosis. Involved in cell cycle regulation. Originally described as a transcription activator for a number of liver genes such as AFP, albumin, tyrosine aminotransferase, PEPCK, etc. Interacts with the cis-acting regulatory regions of these genes. This is Hepatocyte nuclear factor 3-alpha (Foxa1) from Rattus norvegicus (Rat).